We begin with the raw amino-acid sequence, 646 residues long: Macrolide export ATP-binding/permease protein MacB (646 aa).

The ABC transporter domain maps to 5–243 (IELKGVSRTY…TLPKTNRIRQ (239 aa)). 41–48 (GASGSGKS) provides a ligand contact to ATP. The next 4 membrane-spanning stretches (helical) occupy residues 272–292 (TLTM…VALG), 518–538 (FSIL…IGVM), 570–590 (IIEA…LSYI), and 611–631 (AAVA…YLPA).

It belongs to the ABC transporter superfamily. Macrolide exporter (TC 3.A.1.122) family. Homodimer. Part of the tripartite efflux system MacAB-TolC, which is composed of an inner membrane transporter, MacB, a periplasmic membrane fusion protein, MacA, and an outer membrane component, TolC. The complex forms a large protein conduit and can translocate molecules across both the inner and outer membranes. Interacts with MacA.

Its subcellular location is the cell inner membrane. Its function is as follows. Part of the tripartite efflux system MacAB-TolC. MacB is a non-canonical ABC transporter that contains transmembrane domains (TMD), which form a pore in the inner membrane, and an ATP-binding domain (NBD), which is responsible for energy generation. Confers resistance against macrolides. This is Macrolide export ATP-binding/permease protein MacB from Escherichia coli.